We begin with the raw amino-acid sequence, 494 residues long: Solute carrier family 2, facilitated glucose transporter member 3 (494 aa).

The Cytoplasmic segment spans residues 1–10 (MGTTKVTAPL). A helical transmembrane segment spans residues 11–32 (IFAISVATIGSFQFGYNTGVIN). Over 33-64 (APEAIIKDFLNYTLEERSEPPPSSVLLTSLWS) the chain is Extracellular. Asn-43 carries N-linked (GlcNAc...) asparagine glycosylation. The chain crosses the membrane as a helical span at residues 65–85 (LSVAIFSVGGMIGSFSVGLFV). At 86–90 (NRFGR) the chain is on the cytoplasmic side. The chain crosses the membrane as a helical span at residues 91–111 (GNSMLIVNLLAIAGGCLMGFC). Over 112 to 118 (KIAESVE) the chain is Extracellular. Residues 119–142 (MLILGRLIIGLFCGLCTGFVPMYI) form a helical membrane-spanning segment. At 143-153 (GEISPTALRGA) the chain is on the cytoplasmic side. The chain crosses the membrane as a helical span at residues 154–174 (FGTLNQLGIVIGILVAQIFGL). A D-glucose-binding site is contributed by Gln-159. At 175–183 (KVILGTEDL) the chain is on the extracellular side. Residues 184-204 (WPLLLGFTILPAIIQCAALPF) traverse the membrane as a helical segment. Residues 205–269 (CPESPRFLLI…LFRAPNYRQP (65 aa)) lie on the Cytoplasmic side of the membrane. Thr-232 is subject to Phosphothreonine. A helical membrane pass occupies residues 270–290 (IIISIMLQLSQQLSGINAVFY). The segment at 277–279 (QLS) is important for selectivity against fructose. D-glucose-binding positions include 280–281 (QQ) and Asn-286. The Extracellular segment spans residues 291-304 (YSTGIFKDAGVQEP). The chain crosses the membrane as a helical span at residues 305–325 (VYATIGAGVVNTIFTVVSVFL). Position 315 (Asn-315) interacts with D-glucose. The Cytoplasmic segment spans residues 326 to 331 (VERAGR). A helical membrane pass occupies residues 332-352 (RTLHLIGLGGMAFCSILMTIS). Over 353 to 363 (LLLKDNYSWMS) the chain is Extracellular. An N-linked (GlcNAc...) asparagine glycan is attached at Asn-358. Residues 364–389 (FICIGAILVFVAFFEIGPGPIPWFIV) traverse the membrane as a helical segment. Positions 378 and 386 each coordinate D-glucose. Residues 390–399 (AELFGQGPRP) are Cytoplasmic-facing. A helical transmembrane segment spans residues 400–420 (AAMAVAGCSNWTSNFLVGLLF). The Extracellular portion of the chain corresponds to 421 to 429 (PSAAFYLGA). A helical transmembrane segment spans residues 430-450 (YVFIVFTVFLVIFWVFTFFKV). The Cytoplasmic portion of the chain corresponds to 451–494 (PETRGRTFEEITRAFEGQTQTGTRGEKGPIMEMNSIQPTKDTNA). A disordered region spans residues 469-494 (TQTGTRGEKGPIMEMNSIQPTKDTNA). Polar residues predominate over residues 484 to 494 (NSIQPTKDTNA). Ser-485 carries the post-translational modification Phosphoserine. Thr-492 bears the Phosphothreonine mark.

It belongs to the major facilitator superfamily. Sugar transporter (TC 2.A.1.1) family. Glucose transporter subfamily. In terms of assembly, interacts with SMIM43; the interaction may promote SLC2A1-mediated glucose transport to meet the energy needs of mesendoderm differentiation.

The protein resides in the cell membrane. The protein localises to the perikaryon. It is found in the cell projection. It catalyses the reaction D-glucose(out) = D-glucose(in). It carries out the reaction D-galactose(in) = D-galactose(out). With respect to regulation, deoxyglucose transport is inhibited by D-glucose, D-galactose and maltose. Galactose transport is inhibited by D-glucose and maltose. In terms of biological role, facilitative glucose transporter. Can also mediate the uptake of various other monosaccharides across the cell membrane. Mediates the uptake of glucose, 2-deoxyglucose, galactose, mannose, xylose and fucose, and probably also dehydroascorbate. Does not mediate fructose transport. Required for mesendoderm differentiation. In Bos taurus (Bovine), this protein is Solute carrier family 2, facilitated glucose transporter member 3.